The sequence spans 269 residues: Ubiquinone/menaquinone biosynthesis C-methyltransferase UbiE (269 aa).

Residues Thr92, Asp113, and 141–142 (NA) contribute to the S-adenosyl-L-methionine site.

This sequence belongs to the class I-like SAM-binding methyltransferase superfamily. MenG/UbiE family.

The catalysed reaction is a 2-demethylmenaquinol + S-adenosyl-L-methionine = a menaquinol + S-adenosyl-L-homocysteine + H(+). It carries out the reaction a 2-methoxy-6-(all-trans-polyprenyl)benzene-1,4-diol + S-adenosyl-L-methionine = a 5-methoxy-2-methyl-3-(all-trans-polyprenyl)benzene-1,4-diol + S-adenosyl-L-homocysteine + H(+). Its pathway is quinol/quinone metabolism; menaquinone biosynthesis; menaquinol from 1,4-dihydroxy-2-naphthoate: step 2/2. The protein operates within cofactor biosynthesis; ubiquinone biosynthesis. In terms of biological role, methyltransferase required for the conversion of demethylmenaquinol (DMKH2) to menaquinol (MKH2) and the conversion of 2-polyprenyl-6-methoxy-1,4-benzoquinol (DDMQH2) to 2-polyprenyl-3-methyl-6-methoxy-1,4-benzoquinol (DMQH2). This chain is Ubiquinone/menaquinone biosynthesis C-methyltransferase UbiE, found in Brucella canis (strain ATCC 23365 / NCTC 10854 / RM-666).